The sequence spans 298 residues: GTP cyclohydrolase FolE2 (298 aa).

Belongs to the GTP cyclohydrolase IV family.

It carries out the reaction GTP + H2O = 7,8-dihydroneopterin 3'-triphosphate + formate + H(+). The protein operates within cofactor biosynthesis; 7,8-dihydroneopterin triphosphate biosynthesis; 7,8-dihydroneopterin triphosphate from GTP: step 1/1. Its function is as follows. Converts GTP to 7,8-dihydroneopterin triphosphate. This Pseudomonas fluorescens (strain SBW25) protein is GTP cyclohydrolase FolE2.